The sequence spans 155 residues: SsrA-binding protein (155 aa).

It belongs to the SmpB family.

It localises to the cytoplasm. Its function is as follows. Required for rescue of stalled ribosomes mediated by trans-translation. Binds to transfer-messenger RNA (tmRNA), required for stable association of tmRNA with ribosomes. tmRNA and SmpB together mimic tRNA shape, replacing the anticodon stem-loop with SmpB. tmRNA is encoded by the ssrA gene; the 2 termini fold to resemble tRNA(Ala) and it encodes a 'tag peptide', a short internal open reading frame. During trans-translation Ala-aminoacylated tmRNA acts like a tRNA, entering the A-site of stalled ribosomes, displacing the stalled mRNA. The ribosome then switches to translate the ORF on the tmRNA; the nascent peptide is terminated with the 'tag peptide' encoded by the tmRNA and targeted for degradation. The ribosome is freed to recommence translation, which seems to be the essential function of trans-translation. The protein is SsrA-binding protein of Alkaliphilus oremlandii (strain OhILAs) (Clostridium oremlandii (strain OhILAs)).